The chain runs to 205 residues: Transcriptional regulator GfcR (205 aa).

The protein belongs to the purine/pyrimidine phosphoribosyltransferase family. GfcR subfamily.

The sequence is that of Transcriptional regulator GfcR from Methanococcus maripaludis (strain C7 / ATCC BAA-1331).